Here is a 287-residue protein sequence, read N- to C-terminus: 2-dehydro-3-deoxyphosphooctonate aldolase (287 aa).

The protein belongs to the KdsA family.

The protein resides in the cytoplasm. The enzyme catalyses D-arabinose 5-phosphate + phosphoenolpyruvate + H2O = 3-deoxy-alpha-D-manno-2-octulosonate-8-phosphate + phosphate. The protein operates within carbohydrate biosynthesis; 3-deoxy-D-manno-octulosonate biosynthesis; 3-deoxy-D-manno-octulosonate from D-ribulose 5-phosphate: step 2/3. It functions in the pathway bacterial outer membrane biogenesis; lipopolysaccharide biosynthesis. The chain is 2-dehydro-3-deoxyphosphooctonate aldolase from Bradyrhizobium sp. (strain ORS 278).